The primary structure comprises 209 residues: Ubiquitin-conjugating enzyme E2 S (209 aa).

In terms of domain architecture, UBC core spans 14-160 (QTIRQVMREL…ARMMTEIHAQ (147 aa)). C98 functions as the Glycyl thioester intermediate in the catalytic mechanism. The disordered stretch occupies residues 164 to 209 (CGVGASGDAKDDDGPSTKKHAGLDKKLQDKKKEKLLKEKKRMLKRL). Positions 171-199 (DAKDDDGPSTKKHAGLDKKLQDKKKEKLL) are enriched in basic and acidic residues. Over residues 200 to 209 (KEKKRMLKRL) the composition is skewed to basic residues.

Belongs to the ubiquitin-conjugating enzyme family.

It carries out the reaction S-ubiquitinyl-[E1 ubiquitin-activating enzyme]-L-cysteine + [E2 ubiquitin-conjugating enzyme]-L-cysteine = [E1 ubiquitin-activating enzyme]-L-cysteine + S-ubiquitinyl-[E2 ubiquitin-conjugating enzyme]-L-cysteine.. It functions in the pathway protein modification; protein ubiquitination. Catalyzes the covalent attachment of ubiquitin to other proteins. Acts as an essential factor of the anaphase promoting complex/cyclosome (APC/C), a cell cycle-regulated ubiquitin ligase that controls progression through mitosis. Acts by specifically elongating polyubiquitin chains initiated by the E2 enzyme vih/UbcH10 on APC/C substrates, enhancing the degradation of APC/C substrates by the proteasome and promoting mitotic exit. The chain is Ubiquitin-conjugating enzyme E2 S from Drosophila yakuba (Fruit fly).